The sequence spans 740 residues: N-acetylated-alpha-linked acidic dipeptidase 2 (740 aa).

Residues 1 to 7 (MARPRHL) are Cytoplasmic-facing. Residues 8–31 (RGLGMCITAVLASFIAGFTVGWFI) form a helical; Signal-anchor for type II membrane protein membrane-spanning segment. The Extracellular portion of the chain corresponds to 32-740 (KPLKETTTSA…AAAGTLTNVL (709 aa)). Residues asparagine 111, asparagine 143, and asparagine 185 are each glycosylated (N-linked (GlcNAc...) asparagine). Residues arginine 200 and asparagine 247 each contribute to the substrate site. Residues threonine 259 and tyrosine 262 each contribute to the Ca(2+) site. The NAALADase stretch occupies residues 264-577 (AKEYTFRLPV…QLRGALVYEL (314 aa)). A glycan (N-linked (GlcNAc...) asparagine) is linked at asparagine 314. Zn(2+) is bound by residues histidine 367 and aspartate 377. Glutamate 414 lines the substrate pocket. The active-site Nucleophile; for NAALADase activity is glutamate 414. A Zn(2+)-binding site is contributed by glutamate 415. Ca(2+) contacts are provided by glutamate 423 and glutamate 426. Aspartate 443 is a Zn(2+) binding site. Asparagine 449 carries an N-linked (GlcNAc...) asparagine glycan. Residues 507–508 (SG), 524–526 (RAR), tyrosine 542, and 542–543 (YH) each bind substrate. Histidine 543 provides a ligand contact to Zn(2+). Asparagine 603 carries an N-linked (GlcNAc...) asparagine glycan. Serine 618 acts as the Charge relay system in catalysis. Residue asparagine 628 is glycosylated (N-linked (GlcNAc...) asparagine). Active-site charge relay system residues include aspartate 656 and histidine 679. Position 689–690 (689–690 (KY)) interacts with substrate.

It belongs to the peptidase M28 family. M28B subfamily. As to quaternary structure, homodimer. Zn(2+) serves as cofactor. In terms of tissue distribution, expressed ovary, testes and lung, but not brain.

Its subcellular location is the cell membrane. The catalysed reaction is Release of an unsubstituted, C-terminal glutamyl residue, typically from Ac-Asp-Glu or folylpoly-gamma-glutamates.. Has N-acetylated-alpha-linked-acidic dipeptidase (NAALADase) activity. Also exhibits a dipeptidyl-peptidase IV type activity. Inactivates the peptide neurotransmitter N-acetylaspartylglutamate. The sequence is that of N-acetylated-alpha-linked acidic dipeptidase 2 (Naalad2) from Mus musculus (Mouse).